A 55-amino-acid polypeptide reads, in one-letter code: Photosystem II reaction center protein K (55 aa).

A propeptide spanning residues 1–18 is cleaved from the precursor; the sequence is MFYIHLENTFDLSSTILV. A helical transmembrane segment spans residues 26–46; the sequence is IFDPIVDVMPIIPLFFFLLAF.

It belongs to the PsbK family. In terms of assembly, PSII is composed of 1 copy each of membrane proteins PsbA, PsbB, PsbC, PsbD, PsbE, PsbF, PsbH, PsbI, PsbJ, PsbK, PsbL, PsbM, PsbT, PsbX, PsbY, PsbZ, Psb30/Ycf12, at least 3 peripheral proteins of the oxygen-evolving complex and a large number of cofactors. It forms dimeric complexes.

It is found in the plastid. It localises to the chloroplast thylakoid membrane. One of the components of the core complex of photosystem II (PSII). PSII is a light-driven water:plastoquinone oxidoreductase that uses light energy to abstract electrons from H(2)O, generating O(2) and a proton gradient subsequently used for ATP formation. It consists of a core antenna complex that captures photons, and an electron transfer chain that converts photonic excitation into a charge separation. This Anthoceros angustus (Hornwort) protein is Photosystem II reaction center protein K.